The primary structure comprises 145 residues: Prefoldin subunit alpha (145 aa).

It belongs to the prefoldin alpha subunit family. In terms of assembly, heterohexamer of two alpha and four beta subunits.

It localises to the cytoplasm. In terms of biological role, molecular chaperone capable of stabilizing a range of proteins. Seems to fulfill an ATP-independent, HSP70-like function in archaeal de novo protein folding. The chain is Prefoldin subunit alpha from Nitrosopumilus maritimus (strain SCM1).